The sequence spans 231 residues: tRNA (guanine-N(1)-)-methyltransferase (231 aa).

Gly-112 is a binding site for S-adenosyl-L-methionine.

This sequence belongs to the RNA methyltransferase TrmD family. As to quaternary structure, homodimer.

The protein resides in the cytoplasm. The catalysed reaction is guanosine(37) in tRNA + S-adenosyl-L-methionine = N(1)-methylguanosine(37) in tRNA + S-adenosyl-L-homocysteine + H(+). In terms of biological role, specifically methylates guanosine-37 in various tRNAs. This Chlorobium chlorochromatii (strain CaD3) protein is tRNA (guanine-N(1)-)-methyltransferase.